A 140-amino-acid chain; its full sequence is Small ribosomal subunit protein uS12 (140 aa).

Aspartate 102 is subject to 3-methylthioaspartic acid. Residues 121-140 (ANRQQSRSKYGAKKPKAAKK) are disordered. Over residues 130-140 (YGAKKPKAAKK) the composition is skewed to basic residues.

This sequence belongs to the universal ribosomal protein uS12 family. In terms of assembly, part of the 30S ribosomal subunit. Contacts proteins S8 and S17. May interact with IF1 in the 30S initiation complex.

With S4 and S5 plays an important role in translational accuracy. Its function is as follows. Interacts with and stabilizes bases of the 16S rRNA that are involved in tRNA selection in the A site and with the mRNA backbone. Located at the interface of the 30S and 50S subunits, it traverses the body of the 30S subunit contacting proteins on the other side and probably holding the rRNA structure together. The combined cluster of proteins S8, S12 and S17 appears to hold together the shoulder and platform of the 30S subunit. This chain is Small ribosomal subunit protein uS12, found in Alkaliphilus oremlandii (strain OhILAs) (Clostridium oremlandii (strain OhILAs)).